Consider the following 373-residue polypeptide: Nuclear hormone receptor family member nhr-69 (373 aa).

A DNA-binding region (nuclear receptor) is located at residues 3 to 78; that stretch reads EEICHICNDK…AGMKSNAIQN (76 aa). 2 consecutive NR C4-type zinc fingers follow at residues 6–26 and 42–66; these read CHIC…CDGC and CRFE…LQKC. In terms of domain architecture, NR LBD spans 93–344; that stretch reads EKEDLIDQLV…SLMEELILND (252 aa).

This sequence belongs to the nuclear hormone receptor family. As to quaternary structure, interacts with R-SMAD daf-8. Expressed in the ASI neurons, hypodermis, and in tail neurons.

The protein localises to the nucleus. In terms of biological role, orphan nuclear receptor which, in cooperation with R-SMAD daf-8, modulates the Insulin/IGF-1-like signaling (IIS) pathway, perhaps by regulating expression of the potassium channel exp-2, which in turn modulates the secretion of insulin-like peptide daf-28. This Caenorhabditis elegans protein is Nuclear hormone receptor family member nhr-69 (nhr-69).